The following is a 154-amino-acid chain: Myoglobin (154 aa).

The region spanning 2–148 is the Globin domain; the sequence is GLSDGEWQLV…FRNDIAAKYK (147 aa). Phosphoserine is present on S4. H65 contributes to the nitrite binding site. H65 provides a ligand contact to O2. The residue at position 68 (T68) is a Phosphothreonine. Position 94 (H94) interacts with heme b.

The protein belongs to the globin family. As to quaternary structure, monomeric.

The protein localises to the cytoplasm. Its subcellular location is the sarcoplasm. The catalysed reaction is Fe(III)-heme b-[protein] + nitric oxide + H2O = Fe(II)-heme b-[protein] + nitrite + 2 H(+). It carries out the reaction H2O2 + AH2 = A + 2 H2O. Functionally, monomeric heme protein which primary function is to store oxygen and facilitate its diffusion within muscle tissues. Reversibly binds oxygen through a pentacoordinated heme iron and enables its timely and efficient release as needed during periods of heightened demand. Depending on the oxidative conditions of tissues and cells, and in addition to its ability to bind oxygen, it also has a nitrite reductase activity whereby it regulates the production of bioactive nitric oxide. Under stress conditions, like hypoxia and anoxia, it also protects cells against reactive oxygen species thanks to its pseudoperoxidase activity. The protein is Myoglobin (MB) of Sciurus vulgaris (Eurasian red squirrel).